The primary structure comprises 164 residues: Large ribosomal subunit protein uL11 (164 aa).

The protein belongs to the universal ribosomal protein uL11 family. As to quaternary structure, part of the ribosomal stalk of the 50S ribosomal subunit. Interacts with L10 and the large rRNA to form the base of the stalk. L10 forms an elongated spine to which L12 dimers bind in a sequential fashion forming a multimeric L10(L12)X complex.

In terms of biological role, forms part of the ribosomal stalk which helps the ribosome interact with GTP-bound translation factors. In Pyrococcus abyssi (strain GE5 / Orsay), this protein is Large ribosomal subunit protein uL11.